Consider the following 286-residue polypeptide: Putative S-adenosyl-L-methionine-dependent methyltransferase FRAAL3718 (286 aa).

S-adenosyl-L-methionine contacts are provided by residues aspartate 122 and 151 to 152; that span reads DL.

This sequence belongs to the UPF0677 family.

In terms of biological role, exhibits S-adenosyl-L-methionine-dependent methyltransferase activity. The sequence is that of Putative S-adenosyl-L-methionine-dependent methyltransferase FRAAL3718 from Frankia alni (strain DSM 45986 / CECT 9034 / ACN14a).